Consider the following 377-residue polypeptide: MTTENAAIPTKKKKSFWKKMKPLFGLTVLIPTAFSAVYFGLFASDIYVSESSFVVRSPRSQSSLSGVGALLQSTGFSRSQDDTYSVQEYMRSRTALSALEQGLPLRTFYSEKGDLLSRFNGFGLNDTQEAFYRYFKERLSVDVDSISGIATLRVHAFDAEEGYQINERLLKEGESLINRLNERARKDTIEFAEQAVKDAEKNVNETAQALSQYRIKNKIFDLPAQSGVQLSLISSLKSELIRVETQLAQLVSITPDNPQVPALQMRQKSLKKEIDEQTRQLSGNGNSAATQTADYQRLMLANELAQQQLAAAMTSLQNTRGEADRQQLYLEVISQPSKPDWALEPSRIYNIIATFIIGLMLYGVLNLLIASIREHKN.

The next 2 helical transmembrane spans lie at 23–43 (LFGL…GLFA) and 351–371 (IIAT…LIAS).

Belongs to the BexC/CtrB/KpsE family.

It is found in the cell inner membrane. Functionally, may form an ATP-driven capsule polysaccharide export apparatus, in association with the BexA, BexB and BexD proteins. The protein is Capsule polysaccharide export inner-membrane protein BexC (bexC) of Haemophilus influenzae.